Reading from the N-terminus, the 955-residue chain is UvrABC system protein A (955 aa).

35–42 lines the ATP pocket; it reads GLSGSGKS. ABC transporter domains are found at residues 322 to 601 and 621 to 951; these read WGST…EESI and GHDN…RYLK. 654–661 is a binding site for ATP; sequence GVSGSGKS. Residues 754–780 form a C4-type zinc finger; that stretch reads CEACQGDGLIKIEMHFLPDVYVKCDIC.

This sequence belongs to the ABC transporter superfamily. UvrA family. In terms of assembly, forms a heterotetramer with UvrB during the search for lesions.

The protein resides in the cytoplasm. The UvrABC repair system catalyzes the recognition and processing of DNA lesions. UvrA is an ATPase and a DNA-binding protein. A damage recognition complex composed of 2 UvrA and 2 UvrB subunits scans DNA for abnormalities. When the presence of a lesion has been verified by UvrB, the UvrA molecules dissociate. This chain is UvrABC system protein A, found in Rickettsia felis (strain ATCC VR-1525 / URRWXCal2) (Rickettsia azadi).